A 297-amino-acid chain; its full sequence is 4-hydroxy-tetrahydrodipicolinate synthase (297 aa).

Residue threonine 49 participates in pyruvate binding. Tyrosine 137 functions as the Proton donor/acceptor in the catalytic mechanism. The active-site Schiff-base intermediate with substrate is lysine 166. Position 208 (isoleucine 208) interacts with pyruvate.

The protein belongs to the DapA family. Homotetramer; dimer of dimers.

It is found in the cytoplasm. The catalysed reaction is L-aspartate 4-semialdehyde + pyruvate = (2S,4S)-4-hydroxy-2,3,4,5-tetrahydrodipicolinate + H2O + H(+). Its pathway is amino-acid biosynthesis; L-lysine biosynthesis via DAP pathway; (S)-tetrahydrodipicolinate from L-aspartate: step 3/4. Functionally, catalyzes the condensation of (S)-aspartate-beta-semialdehyde [(S)-ASA] and pyruvate to 4-hydroxy-tetrahydrodipicolinate (HTPA). This chain is 4-hydroxy-tetrahydrodipicolinate synthase, found in Prosthecochloris aestuarii (strain DSM 271 / SK 413).